A 392-amino-acid polypeptide reads, in one-letter code: 23S rRNA (uracil(747)-C(5))-methyltransferase RlmC (392 aa).

Positions 4, 12, 15, and 93 each coordinate [4Fe-4S] cluster. Glutamine 218, phenylalanine 247, glutamate 275, and asparagine 321 together coordinate S-adenosyl-L-methionine. The Nucleophile role is filled by cysteine 348.

This sequence belongs to the class I-like SAM-binding methyltransferase superfamily. RNA M5U methyltransferase family. RlmC subfamily.

It carries out the reaction uridine(747) in 23S rRNA + S-adenosyl-L-methionine = 5-methyluridine(747) in 23S rRNA + S-adenosyl-L-homocysteine + H(+). Its function is as follows. Catalyzes the formation of 5-methyl-uridine at position 747 (m5U747) in 23S rRNA. The chain is 23S rRNA (uracil(747)-C(5))-methyltransferase RlmC from Haemophilus influenzae (strain PittEE).